A 281-amino-acid polypeptide reads, in one-letter code: MGAITLDGKATRDEIFVDLKQRVAALTAAGRTPGLGTILVGDDPGSQAYVRGKHADCAKVGITSIRRDLPADISTAALNDTIDELNANPECTGYIVQLPLPKQLDENAALERVDPDKDADGLHPTNLGRLVLNNPAPLPCTPRGIVHLLRRYDVEIAGAHVVVIGRGVTVGRPLGLLLTRRSENATVTLCHTGTRDLPALTRQADIVVAAVGVPHLLTADMVRPGAAVLDVGVSRVDGKLAGDVHPDVWEVAGHVSPNPGGVGPLTRAFLLTNVVELAERE.

NADP(+) contacts are provided by residues 165 to 167 (GRG), T192, and V233.

This sequence belongs to the tetrahydrofolate dehydrogenase/cyclohydrolase family. Homodimer.

It catalyses the reaction (6R)-5,10-methylene-5,6,7,8-tetrahydrofolate + NADP(+) = (6R)-5,10-methenyltetrahydrofolate + NADPH. The enzyme catalyses (6R)-5,10-methenyltetrahydrofolate + H2O = (6R)-10-formyltetrahydrofolate + H(+). Its pathway is one-carbon metabolism; tetrahydrofolate interconversion. In terms of biological role, catalyzes the oxidation of 5,10-methylenetetrahydrofolate to 5,10-methenyltetrahydrofolate and then the hydrolysis of 5,10-methenyltetrahydrofolate to 10-formyltetrahydrofolate. This Mycobacterium avium (strain 104) protein is Bifunctional protein FolD.